We begin with the raw amino-acid sequence, 69 residues long: Protein transport protein Sec61 subunit gamma (69 aa).

Residues 1–40 (MDILEETAAPLKDFAKNSIRLFKKCTKPDAQEFQKIALAT) are Cytoplasmic-facing. A helical transmembrane segment spans residues 41–61 (LIGFAIMGFIGFFVKLIHIPI). At 62-69 (NNILVGGV) the chain is on the extracellular side.

Belongs to the SecE/SEC61-gamma family. Heterotrimeric complex composed of SEC61-alpha, SEC61-beta and SEC61-gamma.

The protein resides in the endoplasmic reticulum membrane. Necessary for protein translocation in the endoplasmic reticulum. In Dictyostelium discoideum (Social amoeba), this protein is Protein transport protein Sec61 subunit gamma (sec61g).